Consider the following 239-residue polypeptide: Ribonuclease PH (239 aa).

Residues R86 and G124–R126 each bind phosphate.

It belongs to the RNase PH family. In terms of assembly, homohexameric ring arranged as a trimer of dimers.

The enzyme catalyses tRNA(n+1) + phosphate = tRNA(n) + a ribonucleoside 5'-diphosphate. Phosphorolytic 3'-5' exoribonuclease that plays an important role in tRNA 3'-end maturation. Removes nucleotide residues following the 3'-CCA terminus of tRNAs; can also add nucleotides to the ends of RNA molecules by using nucleoside diphosphates as substrates, but this may not be physiologically important. Probably plays a role in initiation of 16S rRNA degradation (leading to ribosome degradation) during starvation. The polypeptide is Ribonuclease PH (Rickettsia africae (strain ESF-5)).